We begin with the raw amino-acid sequence, 216 residues long: Probable transaldolase (216 aa).

The Schiff-base intermediate with substrate role is filled by Lys83.

This sequence belongs to the transaldolase family. Type 3B subfamily.

The protein localises to the cytoplasm. It catalyses the reaction D-sedoheptulose 7-phosphate + D-glyceraldehyde 3-phosphate = D-erythrose 4-phosphate + beta-D-fructose 6-phosphate. It participates in carbohydrate degradation; pentose phosphate pathway; D-glyceraldehyde 3-phosphate and beta-D-fructose 6-phosphate from D-ribose 5-phosphate and D-xylulose 5-phosphate (non-oxidative stage): step 2/3. In terms of biological role, transaldolase is important for the balance of metabolites in the pentose-phosphate pathway. The sequence is that of Probable transaldolase from Methanococcus aeolicus (strain ATCC BAA-1280 / DSM 17508 / OCM 812 / Nankai-3).